A 185-amino-acid polypeptide reads, in one-letter code: Ribosome-recycling factor (185 aa).

This sequence belongs to the RRF family.

Its subcellular location is the cytoplasm. In terms of biological role, responsible for the release of ribosomes from messenger RNA at the termination of protein biosynthesis. May increase the efficiency of translation by recycling ribosomes from one round of translation to another. This is Ribosome-recycling factor from Ehrlichia ruminantium (strain Gardel).